The primary structure comprises 249 residues: Enolase-phosphatase E1 (249 aa).

The protein belongs to the HAD-like hydrolase superfamily. MasA/MtnC family. Monomer. Mg(2+) is required as a cofactor.

The enzyme catalyses 5-methylsulfanyl-2,3-dioxopentyl phosphate + H2O = 1,2-dihydroxy-5-(methylsulfanyl)pent-1-en-3-one + phosphate. It functions in the pathway amino-acid biosynthesis; L-methionine biosynthesis via salvage pathway; L-methionine from S-methyl-5-thio-alpha-D-ribose 1-phosphate: step 3/6. It participates in amino-acid biosynthesis; L-methionine biosynthesis via salvage pathway; L-methionine from S-methyl-5-thio-alpha-D-ribose 1-phosphate: step 4/6. Functionally, bifunctional enzyme that catalyzes the enolization of 2,3-diketo-5-methylthiopentyl-1-phosphate (DK-MTP-1-P) into the intermediate 2-hydroxy-3-keto-5-methylthiopentenyl-1-phosphate (HK-MTPenyl-1-P), which is then dephosphorylated to form the acireductone 1,2-dihydroxy-3-keto-5-methylthiopentene (DHK-MTPene). In Pseudomonas aeruginosa (strain ATCC 15692 / DSM 22644 / CIP 104116 / JCM 14847 / LMG 12228 / 1C / PRS 101 / PAO1), this protein is Enolase-phosphatase E1.